Here is a 313-residue protein sequence, read N- to C-terminus: MSSIDPKQFGKVAVLLGGNSAEREVSLNSGRLVLQGLRDAGVDAHPFDPAERPLAALKEEGFVRAFNALHGGYGENGQIQGALDFYGIKYTGSGVLGSALGLDKFRTKLVWQQLGIPTPPFEAVLRGDDYEARSKEIVAKLGLPLFVKPASEGSSVAVIKVKSADALPAALIEAVKYDKIVVVEKSVEGGGEYTACIAGNLDLPVIRIVPAGEFYDYHAKYIANDTQYLIPCGLAADEEARLKVLARRAFDVLGCTDWGRADFMLDADGNPYFLEVNTAPGMTDHSLPPKAARAVGISYQELVVGVLALTLQD.

In terms of domain architecture, ATP-grasp spans 108-308; the sequence is KLVWQQLGIP…YQELVVGVLA (201 aa). ATP is bound at residue 138-193; the sequence is VAKLGLPLFVKPASEGSSVAVIKVKSADALPAALIEAVKYDKIVVVEKSVEGGGEY. The Mg(2+) site is built by Asp-262, Glu-275, and Asn-277.

The protein belongs to the D-alanine--D-alanine ligase family. Requires Mg(2+) as cofactor. Mn(2+) is required as a cofactor.

Its subcellular location is the cytoplasm. It carries out the reaction 2 D-alanine + ATP = D-alanyl-D-alanine + ADP + phosphate + H(+). It functions in the pathway cell wall biogenesis; peptidoglycan biosynthesis. Functionally, cell wall formation. This Paraburkholderia phytofirmans (strain DSM 17436 / LMG 22146 / PsJN) (Burkholderia phytofirmans) protein is D-alanine--D-alanine ligase.